A 370-amino-acid polypeptide reads, in one-letter code: UPF0284 protein PCC7424_2681 (370 aa).

It belongs to the UPF0284 family.

The chain is UPF0284 protein PCC7424_2681 from Gloeothece citriformis (strain PCC 7424) (Cyanothece sp. (strain PCC 7424)).